We begin with the raw amino-acid sequence, 310 residues long: Protein DOS2 (310 aa).

Composition is skewed to basic and acidic residues over residues 15–26 and 135–146; these read DKISNSHTKETG and SNDKDENSKENE. Disordered stretches follow at residues 15–45 and 131–151; these read DKIS…KTNE and AEND…AVGG. One can recognise a BSD domain in the interval 176 to 228; the sequence is QLDPFDVDEKTEEICSILQGDKDISKLMNDIVPHKISYKDFWHIYFLQRNKIL. A disordered region spans residues 240–310; sequence KKEKETEEKE…KDDDDDDDWE (71 aa). Residues 247-263 show a composition bias toward acidic residues; that stretch reads EKEVEWDDEEEEEDDDK. Composition is skewed to basic and acidic residues over residues 264 to 276 and 284 to 300; these read VEAV…KGET and GLKD…KDES. A compositionally biased stretch (acidic residues) spans 301-310; that stretch reads KDDDDDDDWE.

Acts in ubiquitin metabolism and is necessary for the control of single-copy DNA replication. The chain is Protein DOS2 (DOS2) from Saccharomyces cerevisiae (strain ATCC 204508 / S288c) (Baker's yeast).